A 153-amino-acid chain; its full sequence is 6,7-dimethyl-8-ribityllumazine synthase (153 aa).

5-amino-6-(D-ribitylamino)uracil-binding positions include Phe-22, 56-58 (AFE), and 80-82 (TVI). A (2S)-2-hydroxy-3-oxobutyl phosphate-binding site is contributed by 85-86 (ST). The active-site Proton donor is His-88. Residue Phe-113 participates in 5-amino-6-(D-ribitylamino)uracil binding. Arg-127 serves as a coordination point for (2S)-2-hydroxy-3-oxobutyl phosphate.

Belongs to the DMRL synthase family. In terms of assembly, forms an icosahedral capsid composed of 60 subunits, arranged as a dodecamer of pentamers.

It carries out the reaction (2S)-2-hydroxy-3-oxobutyl phosphate + 5-amino-6-(D-ribitylamino)uracil = 6,7-dimethyl-8-(1-D-ribityl)lumazine + phosphate + 2 H2O + H(+). The protein operates within cofactor biosynthesis; riboflavin biosynthesis; riboflavin from 2-hydroxy-3-oxobutyl phosphate and 5-amino-6-(D-ribitylamino)uracil: step 1/2. Functionally, catalyzes the formation of 6,7-dimethyl-8-ribityllumazine by condensation of 5-amino-6-(D-ribitylamino)uracil with 3,4-dihydroxy-2-butanone 4-phosphate. This is the penultimate step in the biosynthesis of riboflavin. This is 6,7-dimethyl-8-ribityllumazine synthase from Actinobacillus pleuropneumoniae serotype 5b (strain L20).